We begin with the raw amino-acid sequence, 1149 residues long: ATP-dependent helicase/deoxyribonuclease subunit B (1149 aa).

The UvrD-like helicase ATP-binding domain maps to 1 to 276; the sequence is MAIRYIFGRA…INLDIEERKV (276 aa). Residue 8–15 participates in ATP binding; it reads GRAGRGKS. Positions 273–586 constitute a UvrD-like helicase C-terminal domain; sequence ERKVLPKEKE…LVGSIERSKS (314 aa). [4Fe-4S] cluster is bound by residues Cys786, Cys1105, Cys1108, and Cys1114.

Belongs to the helicase family. AddB/RexB type 1 subfamily. In terms of assembly, heterodimer of AddA and AddB. Requires Mg(2+) as cofactor. [4Fe-4S] cluster is required as a cofactor.

Functionally, the heterodimer acts as both an ATP-dependent DNA helicase and an ATP-dependent, dual-direction single-stranded exonuclease. Recognizes the chi site generating a DNA molecule suitable for the initiation of homologous recombination. The AddB subunit has 5' -&gt; 3' nuclease activity but not helicase activity. In Alkaliphilus metalliredigens (strain QYMF), this protein is ATP-dependent helicase/deoxyribonuclease subunit B.